Reading from the N-terminus, the 389-residue chain is Acetylornithine aminotransferase (389 aa).

Pyridoxal 5'-phosphate-binding positions include 104–105 (GT) and Phe131. Arg134 is a N(2)-acetyl-L-ornithine binding site. 216-219 (DEVQ) lines the pyridoxal 5'-phosphate pocket. Lys245 carries the post-translational modification N6-(pyridoxal phosphate)lysine. Residue Ser273 coordinates N(2)-acetyl-L-ornithine. A pyridoxal 5'-phosphate-binding site is contributed by Thr274.

It belongs to the class-III pyridoxal-phosphate-dependent aminotransferase family. ArgD subfamily. In terms of assembly, homodimer. It depends on pyridoxal 5'-phosphate as a cofactor.

It is found in the cytoplasm. It catalyses the reaction N(2)-acetyl-L-ornithine + 2-oxoglutarate = N-acetyl-L-glutamate 5-semialdehyde + L-glutamate. The protein operates within amino-acid biosynthesis; L-arginine biosynthesis; N(2)-acetyl-L-ornithine from L-glutamate: step 4/4. This chain is Acetylornithine aminotransferase, found in Methanopyrus kandleri (strain AV19 / DSM 6324 / JCM 9639 / NBRC 100938).